A 361-amino-acid chain; its full sequence is Deoxyribonuclease (361 aa).

The first 24 residues, 1–24, serve as a signal peptide directing secretion; it reads MMHLLRRGAFAILLIVLLPSAALA. Residue His149 is part of the active site.

The protein belongs to the DNase I family. Mg(2+) serves as cofactor. The cofactor is Ca(2+).

Its subcellular location is the secreted. Its function is as follows. DNA nuclease able to digest short and long DNA substrate. Is resistant to ionic strength and thus active at high salt concentration. This Thioalkalivibrio sp. (strain K90mix) protein is Deoxyribonuclease.